A 155-amino-acid polypeptide reads, in one-letter code: NADPH-dependent 7-cyano-7-deazaguanine reductase (155 aa).

The Thioimide intermediate role is filled by Cys-53. Catalysis depends on Asp-60, which acts as the Proton donor. Substrate is bound by residues 75–77 (VES) and 94–95 (HE).

The protein belongs to the GTP cyclohydrolase I family. QueF type 1 subfamily.

The protein resides in the cytoplasm. The enzyme catalyses 7-aminomethyl-7-carbaguanine + 2 NADP(+) = 7-cyano-7-deazaguanine + 2 NADPH + 3 H(+). The protein operates within tRNA modification; tRNA-queuosine biosynthesis. Functionally, catalyzes the NADPH-dependent reduction of 7-cyano-7-deazaguanine (preQ0) to 7-aminomethyl-7-deazaguanine (preQ1). The polypeptide is NADPH-dependent 7-cyano-7-deazaguanine reductase (Hyphomonas neptunium (strain ATCC 15444)).